A 400-amino-acid chain; its full sequence is CinA-like protein (400 aa).

It belongs to the CinA family.

In Escherichia coli (strain 55989 / EAEC), this protein is CinA-like protein.